A 384-amino-acid polypeptide reads, in one-letter code: Protein cutoff (384 aa).

This sequence belongs to the DXO/Dom3Z family. In terms of assembly, component of the Rhino-Deadlock-Cutoff (RDC) complex, composed of rhi/rhino, del/deadlock and cuff/cutoff. Interacts with rhi/rhino; this interaction is indirect and is mediated by del/deadlock. Interacts with del/deadlock (via C-terminal); this interaction is direct. Interacts with Rat1.

It localises to the cytoplasm. The protein localises to the nucleus. It is found in the chromosome. Its function is as follows. Involved in the piRNA pathway in germline tissues. Part of the Rhino-Deadlock-Cutoff (RDC) complex that stimulates piRNA biogenesis from chromatin regions corresponding to dual-strand, but not single-stranded, piRNA clusters. Promotes transcription of long piRNA precursors by preventing termination at canonical poly(A) sites. As part of the RDC complex, is recruited to chromatin enriched in histone modification H3K9me3 and might contribute to complex interaction by binding nascent transcript nucleic acid chains. Associates with chromatin upon exposure to homologous piRNA. Suppresses cleavage at canonical poly(A) sites by blocking recruitment of the cleavage and polyadenylation specificity factor (CPSF) complex and prevents transcriptional termination by RNA polymerase II, facilitating transcriptional read-through. As part of the RDC complex, involved in suppression of splicing. Catalytically inactive, lacking 5'-3' exonuclease and pyrophosphohydrolase activities. Stabilizes uncapped piRNA precursors in the nucleus, probably by sequestering or blocking the exonuclease activity of Rat1. May also be involved in siRNA biogenesis from dual-strand piRNA clusters. The chain is Protein cutoff (cuff) from Drosophila melanogaster (Fruit fly).